The primary structure comprises 210 residues: Protein-methionine-sulfoxide reductase heme-binding subunit MsrQ (210 aa).

A run of 6 helical transmembrane segments spans residues Leu-8 to Phe-28, Val-37 to Thr-57, Leu-75 to Leu-95, Pro-110 to Asn-130, Leu-147 to Leu-167, and Glu-169 to Ala-189.

Belongs to the MsrQ family. As to quaternary structure, heterodimer of a catalytic subunit (MsrP) and a heme-binding subunit (MsrQ). FMN serves as cofactor. Requires heme b as cofactor.

It localises to the cell inner membrane. Part of the MsrPQ system that repairs oxidized periplasmic proteins containing methionine sulfoxide residues (Met-O), using respiratory chain electrons. Thus protects these proteins from oxidative-stress damage caused by reactive species of oxygen and chlorine generated by the host defense mechanisms. MsrPQ is essential for the maintenance of envelope integrity under bleach stress, rescuing a wide series of structurally unrelated periplasmic proteins from methionine oxidation. MsrQ provides electrons for reduction to the reductase catalytic subunit MsrP, using the quinone pool of the respiratory chain. This chain is Protein-methionine-sulfoxide reductase heme-binding subunit MsrQ, found in Pseudomonas syringae pv. tomato (strain ATCC BAA-871 / DC3000).